A 455-amino-acid chain; its full sequence is Kynureninase (455 aa).

Residues leucine 94, threonine 95, 122–125 (FPSD), aspartate 208, histidine 211, and tyrosine 233 each bind pyridoxal 5'-phosphate. Lysine 234 is modified (N6-(pyridoxal phosphate)lysine). Residues tryptophan 275 and asparagine 303 each contribute to the pyridoxal 5'-phosphate site.

It belongs to the kynureninase family. Homodimer. Requires pyridoxal 5'-phosphate as cofactor.

It is found in the cytoplasm. It catalyses the reaction L-kynurenine + H2O = anthranilate + L-alanine + H(+). The catalysed reaction is 3-hydroxy-L-kynurenine + H2O = 3-hydroxyanthranilate + L-alanine + H(+). It functions in the pathway amino-acid degradation; L-kynurenine degradation; L-alanine and anthranilate from L-kynurenine: step 1/1. The protein operates within cofactor biosynthesis; NAD(+) biosynthesis; quinolinate from L-kynurenine: step 2/3. Catalyzes the cleavage of L-kynurenine (L-Kyn) and L-3-hydroxykynurenine (L-3OHKyn) into anthranilic acid (AA) and 3-hydroxyanthranilic acid (3-OHAA), respectively. The protein is Kynureninase of Vanderwaltozyma polyspora (strain ATCC 22028 / DSM 70294 / BCRC 21397 / CBS 2163 / NBRC 10782 / NRRL Y-8283 / UCD 57-17) (Kluyveromyces polysporus).